Here is a 341-residue protein sequence, read N- to C-terminus: Zinc finger protein ZIC 4 (341 aa).

Residues 36 to 66 (HHGPQLAASSNPSVLPGLHEQPPQASHSRPL) form a disordered region. The segment at 135–169 (LICKWLGDDSPMSPRPCSKTFSTMHELVTHVTVEH) adopts a C2H2-type 1; atypical zinc-finger fold. The C2H2-type 2; atypical zinc-finger motif lies at 178-205 (HICFWEECPRQGKPFKAKYKLVNHIRVH). 3 C2H2-type zinc fingers span residues 211–235 (FPCPFPGCGKVFARSENLKIHKRTH), 241–265 (FRCEFEGCERRFANSSDRKKHSHVH), and 271–295 (YMCKVRGCDKCYTHPSSLRKHMKVH). The segment at 289 to 309 (RKHMKVHGRSPPPSSGYDSAI) is disordered.

This sequence belongs to the GLI C2H2-type zinc-finger protein family. As to expression, exclusively expressed in the cerebellum.

The protein localises to the nucleus. Functionally, binds to DNA. This Mus musculus (Mouse) protein is Zinc finger protein ZIC 4 (Zic4).